The following is a 774-amino-acid chain: Penicillin acylase 2 proenzyme (774 aa).

Catalysis depends on S240, which acts as the Nucleophile.

This sequence belongs to the peptidase S45 family. Heterodimer of a small subunit and a large subunit processed from the same precursor.

It catalyses the reaction a penicillin + H2O = 6-aminopenicillanate + a carboxylate. This is Penicillin acylase 2 proenzyme (acyII) from Pseudomonas sp. (strain SE83).